Here is a 386-residue protein sequence, read N- to C-terminus: Skeletal aspartic acid-rich protein 1 (386 aa).

Residues 1-24 (MAFVSCFHLRLLFLCLALFMAAEC) form the signal peptide. Disordered stretches follow at residues 33 to 145 (VDSD…PFSL) and 244 to 291 (EVTD…DCPH). The segment covering 63-107 (YDASDDNDNDNDDDDNNDNDNDNDDDNDVDRDNDNDDDDFDDSND) has biased composition (acidic residues). 2 stretches are compositionally biased toward basic and acidic residues: residues 133 to 142 (HSVESFEDRP) and 244 to 265 (EVTD…KDTP). Positions 266–288 (DTDSDPDDSSDNANDGDDDDDDD) are enriched in acidic residues.

As to expression, component of the acid-insoluble and acid-soluble organic matrix of the aragonitic skeleton (at protein level).

The protein resides in the secreted. In Acropora millepora (Staghorn coral), this protein is Skeletal aspartic acid-rich protein 1.